We begin with the raw amino-acid sequence, 199 residues long: Recombination protein RecR (199 aa).

The C4-type zinc finger occupies 58–73; sequence CARCGNITSADLCDIC. In terms of domain architecture, Toprim spans 81-176; sequence GELCVVEDVA…QVTSLAQGVP (96 aa).

Belongs to the RecR family.

May play a role in DNA repair. It seems to be involved in an RecBC-independent recombinational process of DNA repair. It may act with RecF and RecO. The protein is Recombination protein RecR of Cereibacter sphaeroides (strain ATCC 17025 / ATH 2.4.3) (Rhodobacter sphaeroides).